Reading from the N-terminus, the 484-residue chain is RNA polymerase sigma-54 factor 1 (484 aa).

The segment at residues 355–374 is a DNA-binding region (H-T-H motif); that stretch reads NLKAVAEAIQMHESTVSRVT. The short motif at 444–452 is the RPON box element; the sequence is ARRTVAKYR. The disordered stretch occupies residues 464–484; the sequence is RRDNMWSTMNSRASGGTGLDK. Over residues 468–477 the composition is skewed to polar residues; that stretch reads MWSTMNSRAS.

It belongs to the sigma-54 factor family.

Its function is as follows. Sigma factors are initiation factors that promote the attachment of RNA polymerase to specific initiation sites and are then released. This sigma factor is responsible for the expression of the nitrogen fixation genes. The protein is RNA polymerase sigma-54 factor 1 (rpoN1) of Bradyrhizobium diazoefficiens (strain JCM 10833 / BCRC 13528 / IAM 13628 / NBRC 14792 / USDA 110).